The primary structure comprises 90 residues: Probable Fe(2+)-trafficking protein (90 aa).

This sequence belongs to the Fe(2+)-trafficking protein family. As to quaternary structure, monomer.

Functionally, could be a mediator in iron transactions between iron acquisition and iron-requiring processes, such as synthesis and/or repair of Fe-S clusters in biosynthetic enzymes. The chain is Probable Fe(2+)-trafficking protein from Hamiltonella defensa subsp. Acyrthosiphon pisum (strain 5AT).